We begin with the raw amino-acid sequence, 533 residues long: Flavin-containing monooxygenase 5 (533 aa).

Arg-5 is modified (dimethylated arginine). FAD-binding positions include 10–14 (GGGVS), Glu-33, and 41–42 (LW). Position 54 is a phosphoserine (Ser-54). The residue at position 56 (Tyr-56) is a Phosphotyrosine. Residue Ser-58 is modified to Phosphoserine. 62-63 (NT) lines the FAD pocket. 196–199 (SGGD) serves as a coordination point for NADP(+). Ser-280 is modified (phosphoserine). Thr-284 carries the phosphothreonine modification. Ser-401 carries the post-translational modification Phosphoserine. The helical transmembrane segment at 513 to 533 (TMTIGKFMLALAFFAIIIAYF) threads the bilayer.

It belongs to the FMO family. FAD is required as a cofactor. As to expression, expressed in fetal and adult liver.

It is found in the microsome membrane. Its subcellular location is the endoplasmic reticulum membrane. It catalyses the reaction N,N-dimethylaniline + NADPH + O2 + H(+) = N,N-dimethylaniline N-oxide + NADP(+) + H2O. The enzyme catalyses NADPH + O2 + H(+) = H2O2 + NADP(+). The catalysed reaction is heptan-2-one + NADPH + O2 + H(+) = pentyl acetate + NADP(+) + H2O. It carries out the reaction octan-3-one + NADPH + O2 + H(+) = pentyl propanoate + NADP(+) + H2O. It catalyses the reaction octan-3-one + NADPH + O2 + H(+) = ethyl hexanoate + NADP(+) + H2O. The enzyme catalyses hexan-3-one + NADPH + O2 + H(+) = ethyl butanoate + NADP(+) + H2O. The catalysed reaction is hexan-3-one + NADPH + O2 + H(+) = propyl propanoate + NADP(+) + H2O. It carries out the reaction heptan-4-one + NADPH + O2 + H(+) = propyl butanoate + NADP(+) + H2O. It catalyses the reaction (2E)-geranial + NADPH + O2 + H(+) = (1E)-2,6-dimethylhepta-1,5-dien-1-yl formate + NADP(+) + H2O. The enzyme catalyses sulcatone + NADPH + O2 + H(+) = 4-methylpent-3-en-1-yl acetate + NADP(+) + H2O. In terms of biological role, acts as a Baeyer-Villiger monooxygenase on a broad range of substrates. Catalyzes the insertion of an oxygen atom into a carbon-carbon bond adjacent to a carbonyl, which converts ketones to esters. Active on diverse carbonyl compounds, whereas soft nucleophiles are mostly non- or poorly reactive. In contrast with other forms of FMO it is non- or poorly active on 'classical' substrates such as drugs, pesticides, and dietary components containing soft nucleophilic heteroatoms. Able to oxidize drug molecules bearing a carbonyl group on an aliphatic chain, such as nabumetone and pentoxifylline. Also, in the absence of substrates, shows slow but yet significant NADPH oxidase activity. Acts as a positive modulator of cholesterol biosynthesis as well as glucose homeostasis, promoting metabolic aging via pleiotropic effects. The sequence is that of Flavin-containing monooxygenase 5 from Homo sapiens (Human).